Consider the following 425-residue polypeptide: Histidine--tRNA ligase (425 aa).

It belongs to the class-II aminoacyl-tRNA synthetase family. Homodimer.

The protein localises to the cytoplasm. The enzyme catalyses tRNA(His) + L-histidine + ATP = L-histidyl-tRNA(His) + AMP + diphosphate + H(+). This Shewanella sp. (strain W3-18-1) protein is Histidine--tRNA ligase.